The primary structure comprises 3912 residues: Ubiquitin carboxyl-terminal hydrolase puf (3912 aa).

Disordered regions lie at residues alanine 101–histidine 172, asparagine 518–glutamate 590, aspartate 660–aspartate 688, valine 851–serine 878, and serine 1491–serine 1611. The span at glutamate 106 to proline 133 shows a compositional bias: basic and acidic residues. Residues serine 134 to glycine 143 are compositionally biased toward low complexity. Residues lysine 150–threonine 164 show a composition bias toward pro residues. Low complexity predominate over residues serine 522 to serine 532. Positions isoleucine 576–lysine 585 are enriched in basic and acidic residues. Residues aspartate 660–serine 687 show a composition bias toward acidic residues. Positions lysine 862 to glutamine 876 are enriched in polar residues. Basic residues predominate over residues valine 1511–arginine 1520. Residues threonine 1550–glycine 1567 show a composition bias toward polar residues. Residues lysine 1583–proline 1594 show a composition bias toward basic and acidic residues. The span at proline 1600–alanine 1609 shows a compositional bias: pro residues. Residues valine 2015–arginine 2380 form the USP domain. Cysteine 2024 functions as the Nucleophile in the catalytic mechanism. Over residues tyrosine 2249 to alanine 2263 the composition is skewed to basic and acidic residues. The segment at tyrosine 2249–lysine 2274 is disordered. The active-site Proton acceptor is the histidine 2305. Disordered stretches follow at residues glutamate 2391–alanine 2529, glutamine 3322–glutamine 3344, serine 3657–glutamate 3776, and alanine 3800–isoleucine 3912. 2 stretches are compositionally biased toward basic and acidic residues: residues valine 2402–lysine 2413 and glutamate 2433–threonine 2488. Residues asparagine 2504–glutamine 2523 are compositionally biased toward low complexity. The segment covering serine 3657–serine 3703 has biased composition (basic and acidic residues). Residues serine 3706–lysine 3721 are compositionally biased toward polar residues. Residues serine 3741–leucine 3751 are compositionally biased toward acidic residues. Residues threonine 3766–glutamate 3776 are compositionally biased toward basic and acidic residues. Polar residues predominate over residues proline 3865–glutamate 3877. Over residues serine 3878–isoleucine 3912 the composition is skewed to low complexity.

It belongs to the peptidase C19 family. Interacts with Myc and ago.

The protein resides in the nucleus. It carries out the reaction Thiol-dependent hydrolysis of ester, thioester, amide, peptide and isopeptide bonds formed by the C-terminal Gly of ubiquitin (a 76-residue protein attached to proteins as an intracellular targeting signal).. Functionally, ubiquitin hydrolase that can remove conjugated ubiquitin from target proteins and polyubiquitin chains. Essential for Myc-mediated cell growth and proliferation in developing eyes and wings. In the wing and eye, the deubiquitinating activity acts as an antagonist to the SCF E3 ubiquitin-protein ligase member archipelago (ago) to regulate Myc and CycE stability and thus control cell growth and proliferation. Also appears to regulate ago by modulating its induction by Myc. May also promote cell apoptosis in the wing imaginal disk, acting in an apoptotic pathway that appears to be largely independent of Myc. Required for preventing the activation of the immune deficiency (Imd) and Toll signaling cascades under unchallenged conditions. Also appears to be involved in modulating the differential expression of certain antimicrobial peptides (AMP) in response to infection by either Gram-positive or Gram-negative bacteria. Involved in the regulation of DNA damage repair pathways, including euchromatic site-specific double strand break (DSB) repair. This chain is Ubiquitin carboxyl-terminal hydrolase puf, found in Drosophila melanogaster (Fruit fly).